Consider the following 159-residue polypeptide: MQCPTCQNTDSRVLESRSADSGKSVRRRRECLNCSFRFTTYERVESMPVSVMKKDGSRELFDKQKLFTGISRACEKTNFSSEAIINFVDGIESQIVQDSNKDIKSSQIGELILKNLRKENEVAYIRYASVYRKFNGVKDFISTLESLKGSSKNQLASIS.

Residues 1–11 show a composition bias toward polar residues; that stretch reads MQCPTCQNTDS. Residues 1–21 form a disordered region; that stretch reads MQCPTCQNTDSRVLESRSADS. A zinc finger lies at 3 to 34; that stretch reads CPTCQNTDSRVLESRSADSGKSVRRRRECLNC. In terms of domain architecture, ATP-cone spans 49 to 139; the sequence is VSVMKKDGSR…VYRKFNGVKD (91 aa).

It belongs to the NrdR family. The cofactor is Zn(2+).

Negatively regulates transcription of bacterial ribonucleotide reductase nrd genes and operons by binding to NrdR-boxes. This is Transcriptional repressor NrdR from Prochlorococcus marinus (strain MIT 9215).